The primary structure comprises 317 residues: Apolipoprotein E (317 aa).

The N-terminal stretch at Met1–Ala18 is a signal peptide. O-linked (GalNAc...) threonine glycans are attached at residues Thr26 and Thr36. Repeat copies occupy residues Ala80–Thr101, Pro102–Gly123, Ala124–Gly145, Gln146–Leu167, Arg168–Glu189, Arg190–Ala211, Thr212–Arg233, and Ala234–Ala255. The tract at residues Ala80–Ala255 is 8 X 22 AA approximate tandem repeats. N-linked (Glc) (glycation) lysine glycosylation is present at Lys93. Position 143 is a methionine sulfoxide (Met143). The residue at position 147 (Ser147) is a Phosphoserine; by FAM20C. The segment at His158–Arg168 is LDL and other lipoprotein receptors binding. Leu162 to Arg165 is a binding site for heparin. A lipid-binding and lipoprotein association region spans residues Ala210–Met290. A glycan (O-linked (GalNAc...) threonine) is linked at Thr212. Gly229–Met236 is a heparin binding site. The segment at Gln266–His317 is homooligomerization. The interval Arg278 to Met290 is specificity for association with VLDL. A glycan (O-linked (GalNAc...) threonine) is linked at Thr307. Residues Ser308 and Ser314 are each glycosylated (O-linked (GalNAc...) serine).

This sequence belongs to the apolipoprotein A1/A4/E family. Homotetramer. May interact with ABCA1; functionally associated with ABCA1 in the biogenesis of HDLs. May interact with APP/A4 amyloid-beta peptide; the interaction is extremely stable in vitro but its physiological significance is unclear. May interact with MAPT. May interact with MAP2. In the cerebrospinal fluid, interacts with secreted SORL1. Interacts with PMEL; this allows the loading of PMEL luminal fragment on ILVs to induce fibril nucleation. As to quaternary structure, (Microbial infection) Interacts with hepatitis C virus (HCV) envelope glycoprotein E2; this interaction is required for HCV infectivity and production. APOE exists as multiple glycosylated and sialylated glycoforms within cells and in plasma. The extent of glycosylation and sialylation are tissue and context specific. Plasma APOE undergoes desialylation and is less glycosylated and sialylated than the cellular form. Glycosylation is not required for proper expression and secretion. O-glycosylated with core 1 or possibly core 8 glycans. Thr-307 and Ser-314 are minor glycosylation sites compared to Ser-308. In terms of processing, glycated in plasma VLDL of normal subjects, and of hyperglycemic diabetic patients at a higher level (2-3 fold). Post-translationally, phosphorylated by FAM20C in the extracellular medium. Undergoes C-terminal proteolytic processing in neurons. C-terminally truncated APOE has a tendency to form neurotoxic intracellular neurofibrillary tangle-like inclusions in neurons. Produced by several tissues and cell types and mainly found associated with lipid particles in the plasma, the interstitial fluid and lymph. Mainly synthesized by liver hepatocytes. Significant quantities are also produced in brain, mainly by astrocytes and glial cells in the cerebral cortex, but also by neurons in frontal cortex and hippocampus. It is also expressed by cells of the peripheral nervous system. Also expressed by adrenal gland, testis, ovary, skin, kidney, spleen and adipose tissue and macrophages in various tissues.

It is found in the secreted. The protein resides in the extracellular space. It localises to the extracellular matrix. The protein localises to the extracellular vesicle. Its subcellular location is the endosome. It is found in the multivesicular body. Functionally, APOE is an apolipoprotein, a protein associating with lipid particles, that mainly functions in lipoprotein-mediated lipid transport between organs via the plasma and interstitial fluids. APOE is a core component of plasma lipoproteins and is involved in their production, conversion and clearance. Apolipoproteins are amphipathic molecules that interact both with lipids of the lipoprotein particle core and the aqueous environment of the plasma. As such, APOE associates with chylomicrons, chylomicron remnants, very low density lipoproteins (VLDL) and intermediate density lipoproteins (IDL) but shows a preferential binding to high-density lipoproteins (HDL). It also binds a wide range of cellular receptors including the LDL receptor/LDLR, the LDL receptor-related proteins LRP1, LRP2 and LRP8 and the very low-density lipoprotein receptor/VLDLR that mediate the cellular uptake of the APOE-containing lipoprotein particles. Finally, APOE also has a heparin-binding activity and binds heparan-sulfate proteoglycans on the surface of cells, a property that supports the capture and the receptor-mediated uptake of APOE-containing lipoproteins by cells. A main function of APOE is to mediate lipoprotein clearance through the uptake of chylomicrons, VLDLs, and HDLs by hepatocytes. APOE is also involved in the biosynthesis by the liver of VLDLs as well as their uptake by peripheral tissues ensuring the delivery of triglycerides and energy storage in muscle, heart and adipose tissues. By participating in the lipoprotein-mediated distribution of lipids among tissues, APOE plays a critical role in plasma and tissues lipid homeostasis. APOE is also involved in two steps of reverse cholesterol transport, the HDLs-mediated transport of cholesterol from peripheral tissues to the liver, and thereby plays an important role in cholesterol homeostasis. First, it is functionally associated with ABCA1 in the biogenesis of HDLs in tissues. Second, it is enriched in circulating HDLs and mediates their uptake by hepatocytes. APOE also plays an important role in lipid transport in the central nervous system, regulating neuron survival and sprouting. APOE is also involved in innate and adaptive immune responses, controlling for instance the survival of myeloid-derived suppressor cells. Binds to the immune cell receptor LILRB4. APOE may also play a role in transcription regulation through a receptor-dependent and cholesterol-independent mechanism, that activates MAP3K12 and a non-canonical MAPK signal transduction pathway that results in enhanced AP-1-mediated transcription of APP. In terms of biological role, (Microbial infection) Through its interaction with HCV envelope glycoprotein E2, participates in the attachment of HCV to HSPGs and other receptors (LDLr, VLDLr, and SR-B1) on the cell surface and to the assembly, maturation and infectivity of HCV viral particles. This interaction is probably promoted via the up-regulation of cellular autophagy by the virus. The sequence is that of Apolipoprotein E from Homo sapiens (Human).